The following is a 135-amino-acid chain: Probable histone H2A.1 (135 aa).

This sequence belongs to the histone H2A family. In terms of assembly, the nucleosome is a histone octamer containing two molecules each of H2A, H2B, H3 and H4 assembled in one H3-H4 heterotetramer and two H2A-H2B heterodimers. The octamer wraps approximately 147 bp of DNA.

It is found in the nucleus. Its subcellular location is the chromosome. Functionally, core component of nucleosome. Nucleosomes wrap and compact DNA into chromatin, limiting DNA accessibility to the cellular machineries which require DNA as a template. Histones thereby play a central role in transcription regulation, DNA repair, DNA replication and chromosomal stability. DNA accessibility is regulated via a complex set of post-translational modifications of histones, also called histone code, and nucleosome remodeling. In Oryza sativa subsp. japonica (Rice), this protein is Probable histone H2A.1.